We begin with the raw amino-acid sequence, 168 residues long: Phosphopantetheine adenylyltransferase (168 aa).

Serine 9 serves as a coordination point for substrate. ATP contacts are provided by residues 9–10 (SF) and histidine 17. 3 residues coordinate substrate: lysine 41, leucine 73, and arginine 87. Residues 88 to 90 (GMR), glutamate 98, and 123 to 129 (WIYTSSS) contribute to the ATP site.

This sequence belongs to the bacterial CoaD family. As to quaternary structure, homohexamer. Mg(2+) is required as a cofactor.

The protein localises to the cytoplasm. The catalysed reaction is (R)-4'-phosphopantetheine + ATP + H(+) = 3'-dephospho-CoA + diphosphate. Its pathway is cofactor biosynthesis; coenzyme A biosynthesis; CoA from (R)-pantothenate: step 4/5. Its function is as follows. Reversibly transfers an adenylyl group from ATP to 4'-phosphopantetheine, yielding dephospho-CoA (dPCoA) and pyrophosphate. This Desulfosudis oleivorans (strain DSM 6200 / JCM 39069 / Hxd3) (Desulfococcus oleovorans) protein is Phosphopantetheine adenylyltransferase.